A 568-amino-acid chain; its full sequence is Oxygen-dependent choline dehydrogenase (568 aa).

Residue 8-37 (DYIIIGAGSAGNTLAARLTEDAGVTVLLLE) participates in FAD binding. H477 functions as the Proton acceptor in the catalytic mechanism.

Belongs to the GMC oxidoreductase family. It depends on FAD as a cofactor.

It catalyses the reaction choline + A = betaine aldehyde + AH2. The enzyme catalyses betaine aldehyde + NAD(+) + H2O = glycine betaine + NADH + 2 H(+). The protein operates within amine and polyamine biosynthesis; betaine biosynthesis via choline pathway; betaine aldehyde from choline (cytochrome c reductase route): step 1/1. Functionally, involved in the biosynthesis of the osmoprotectant glycine betaine. Catalyzes the oxidation of choline to betaine aldehyde and betaine aldehyde to glycine betaine at the same rate. The polypeptide is Oxygen-dependent choline dehydrogenase (Pseudomonas syringae pv. syringae (strain B728a)).